The primary structure comprises 1098 residues: Bifunctional helicase and thymine dioxygenase JBP2 (1098 aa).

The interval 1-540 is thymine dioxygenase; that stretch reads MLNGLTRVST…PPLFVPTRLA (540 aa). His-415, Asp-417, and His-465 together coordinate Fe cation. Arg-479 provides a ligand contact to 2-oxoglutarate. A DNA Helicase region spans residues 541-1098; that stretch reads SHLAPVQLAA…RYQESVRESE (558 aa). The region spanning 555–730 is the Helicase ATP-binding domain; it reads VERTEKQSGC…YRLVGWVNKG (176 aa). Residue 568 to 575 participates in ATP binding; that stretch reads MTMGLGKT. The DEAH box motif lies at 681–684; sequence DEGH. The 161-residue stretch at 897–1057 folds into the Helicase C-terminal domain; sequence VLVDIVLRVQ…ALPDELEDCA (161 aa).

It in the C-terminal section; belongs to the SNF2/RAD54 helicase family. In the N-terminal section; belongs to the TET family. JBP2 subfamily. It depends on Fe(2+) as a cofactor.

The protein resides in the nucleus. The catalysed reaction is ATP + H2O = ADP + phosphate + H(+). It carries out the reaction thymine + 2-oxoglutarate + O2 = 5-hydroxymethyluracil + succinate + CO2. In terms of biological role, dioxygenase that catalyzes the first step of DNA base J (beta-d-glucosyl-HOMedU) biosynthesis by converting thymine to 5-hydroxymethyluracil (HOMedU). DNA base J is a hypermodified thymidine residue found in the genome of kinetoplastid parasites, which is localized primarily to repetitive DNA, namely the telomeres, and is implicated in the regulation of antigenic variation. Probably also acts as a DNA helicase. Recognizes and binds specific regions of the genome, hydrolyzes ATP and allows the DNA base J de novo synthesis. Involved in initial synthesis of DNA base J, JBP1 being able to act via the basal level of DNA base J and propagate further synthesis. In contrast to JBP1, it does not specifically bind DNA base J, however it binds chromatin. This is Bifunctional helicase and thymine dioxygenase JBP2 (JBP2) from Leishmania infantum.